The chain runs to 139 residues: MSAVRPLRPERQAQKQARGAAARLSGRRAEVLAALWLMAKGYRILGFRLATPLGEIDLLAQRRGVLAVVEVKSRTSLEAALEAVTYEQRSRLRRAGAHIAANRAGLRDAVVRLDLIALAPGRRPRHLLNAWPNTGNDGQ.

This sequence belongs to the UPF0102 family.

This chain is UPF0102 protein Caul_0175, found in Caulobacter sp. (strain K31).